A 235-amino-acid polypeptide reads, in one-letter code: tRNA (guanine-N(1)-)-methyltransferase (235 aa).

Residues Gly-114 and 134 to 139 (IGDYIL) contribute to the S-adenosyl-L-methionine site.

Belongs to the RNA methyltransferase TrmD family. As to quaternary structure, homodimer.

Its subcellular location is the cytoplasm. It catalyses the reaction guanosine(37) in tRNA + S-adenosyl-L-methionine = N(1)-methylguanosine(37) in tRNA + S-adenosyl-L-homocysteine + H(+). Its function is as follows. Specifically methylates guanosine-37 in various tRNAs. This is tRNA (guanine-N(1)-)-methyltransferase from Ehrlichia ruminantium (strain Gardel).